Reading from the N-terminus, the 348-residue chain is Sulfate/thiosulfate import ATP-binding protein CysA (348 aa).

One can recognise an ABC transporter domain in the interval 3–237; it reads IRIQELRKQF…PSSPFVYSFV (235 aa). Position 35–42 (35–42) interacts with ATP; it reads GPSGSGKT.

This sequence belongs to the ABC transporter superfamily. Sulfate/tungstate importer (TC 3.A.1.6) family. In terms of assembly, the complex is composed of two ATP-binding proteins (CysA), two transmembrane proteins (CysT and CysW) and a solute-binding protein (CysP).

The protein resides in the cell inner membrane. It catalyses the reaction sulfate(out) + ATP + H2O = sulfate(in) + ADP + phosphate + H(+). The enzyme catalyses thiosulfate(out) + ATP + H2O = thiosulfate(in) + ADP + phosphate + H(+). Functionally, part of the ABC transporter complex CysAWTP involved in sulfate/thiosulfate import. Responsible for energy coupling to the transport system. This chain is Sulfate/thiosulfate import ATP-binding protein CysA, found in Xylella fastidiosa (strain Temecula1 / ATCC 700964).